The chain runs to 71 residues: ATP synthase F(0) complex subunit e, mitochondrial (71 aa).

The residue at position 34 (K34) is an N6-acetyllysine. S68 carries the post-translational modification Phosphoserine.

It belongs to the ATPase e subunit family. Component of the ATP synthase complex composed at least of ATP5F1A/subunit alpha, ATP5F1B/subunit beta, ATP5MC1/subunit c (homooctomer), MT-ATP6/subunit a, MT-ATP8/subunit 8, ATP5ME/subunit e, ATP5MF/subunit f, ATP5MG/subunit g, ATP5MK/subunit k, ATP5MJ/subunit j, ATP5F1C/subunit gamma, ATP5F1D/subunit delta, ATP5F1E/subunit epsilon, ATP5PF/subunit F6, ATP5PB/subunit b, ATP5PD/subunit d, ATP5PO/subunit OSCP. ATP synthase complex consists of a soluble F(1) head domain (subunits alpha(3) and beta(3)) - the catalytic core - and a membrane F(0) domain - the membrane proton channel (subunits c, a, 8, e, f, g, k and j). These two domains are linked by a central stalk (subunits gamma, delta, and epsilon) rotating inside the F1 region and a stationary peripheral stalk (subunits F6, b, d, and OSCP).

Its subcellular location is the mitochondrion. It is found in the mitochondrion inner membrane. Subunit e, of the mitochondrial membrane ATP synthase complex (F(1)F(0) ATP synthase or Complex V) that produces ATP from ADP in the presence of a proton gradient across the membrane which is generated by electron transport complexes of the respiratory chain. ATP synthase complex consist of a soluble F(1) head domain - the catalytic core - and a membrane F(1) domain - the membrane proton channel. These two domains are linked by a central stalk rotating inside the F(1) region and a stationary peripheral stalk. During catalysis, ATP synthesis in the catalytic domain of F(1) is coupled via a rotary mechanism of the central stalk subunits to proton translocation. In vivo, can only synthesize ATP although its ATP hydrolase activity can be activated artificially in vitro. Part of the complex F(0) domain. This is ATP synthase F(0) complex subunit e, mitochondrial from Rattus norvegicus (Rat).